Consider the following 237-residue polypeptide: Ribosomal RNA small subunit methyltransferase G (237 aa).

S-adenosyl-L-methionine is bound by residues G78, F83, 129 to 130 (AE), and R148.

It belongs to the methyltransferase superfamily. RNA methyltransferase RsmG family.

It localises to the cytoplasm. Functionally, specifically methylates the N7 position of a guanine in 16S rRNA. The chain is Ribosomal RNA small subunit methyltransferase G from Streptococcus pyogenes serotype M12 (strain MGAS9429).